The chain runs to 339 residues: WAT1-related protein At5g40210 (339 aa).

The next 10 helical transmembrane spans lie at 11–31 (GWIL…NTLV), 42–62 (FVVL…LTFF), 74–94 (FSIL…QILG), 104–124 (TLSS…AVVF), 140–160 (VLGT…HGPM), 168–188 (WIIG…SYLV), 200–220 (VVVT…VSLL), 233–253 (FDIT…YYVI), 266–286 (LSMF…IFLG), and 289–309 (LYLG…MVLW). The EamA domain maps to 29-154 (TLVKAATSKG…LSIIGALVVT (126 aa)).

Belongs to the drug/metabolite transporter (DMT) superfamily. Plant drug/metabolite exporter (P-DME) (TC 2.A.7.4) family.

Its subcellular location is the membrane. This Arabidopsis thaliana (Mouse-ear cress) protein is WAT1-related protein At5g40210.